A 229-amino-acid polypeptide reads, in one-letter code: Large ribosomal subunit protein uL1 (229 aa).

It belongs to the universal ribosomal protein uL1 family. As to quaternary structure, part of the 50S ribosomal subunit.

Its function is as follows. Binds directly to 23S rRNA. The L1 stalk is quite mobile in the ribosome, and is involved in E site tRNA release. In terms of biological role, protein L1 is also a translational repressor protein, it controls the translation of the L11 operon by binding to its mRNA. This is Large ribosomal subunit protein uL1 from Clostridium botulinum (strain ATCC 19397 / Type A).